Reading from the N-terminus, the 586-residue chain is Maltogenic alpha-amylase (586 aa).

N147, N152, D153, G172, and D174 together coordinate Ca(2+). 2 residues coordinate substrate: H247 and R326. D328 (nucleophile) is an active-site residue. Catalysis depends on E357, which acts as the Proton donor. Substrate is bound by residues 423-424 (HD), D468, and R472.

Belongs to the glycosyl hydrolase 13 family. The cofactor is Ca(2+).

The enzyme catalyses hydrolysis of (1-&gt;4)-alpha-D-glucosidic linkages in polysaccharides so as to remove successive alpha-maltose residues from the non-reducing ends of the chains.. Its function is as follows. Converts starch into maltose. The sequence is that of Maltogenic alpha-amylase from Bacillus acidopullulyticus.